A 212-amino-acid chain; its full sequence is Ribosomal RNA small subunit methyltransferase G (212 aa).

Residues Gly-75, Leu-80, 126–127 (AQ), and Arg-141 contribute to the S-adenosyl-L-methionine site.

It belongs to the methyltransferase superfamily. RNA methyltransferase RsmG family.

The protein localises to the cytoplasm. Specifically methylates the N7 position of guanine in position 518 of 16S rRNA. The polypeptide is Ribosomal RNA small subunit methyltransferase G (Beutenbergia cavernae (strain ATCC BAA-8 / DSM 12333 / CCUG 43141 / JCM 11478 / NBRC 16432 / NCIMB 13614 / HKI 0122)).